A 131-amino-acid polypeptide reads, in one-letter code: Histone H2B.1 (131 aa).

Positions 1–19 (MSAKAEKKPASKAPAEKKP) are enriched in basic and acidic residues. A disordered region spans residues 1–38 (MSAKAEKKPASKAPAEKKPAAKKTSTSTDGKKRSKARK). An N6-acetyllysine; alternate mark is found at Lys-7 and Lys-8. Residues Lys-7 and Lys-8 each participate in a glycyl lysine isopeptide (Lys-Gly) (interchain with G-Cter in SUMO); alternate cross-link. Ser-11 carries the phosphoserine modification. Position 12 is an N6-acetyllysine (Lys-12). N6-acetyllysine; alternate occurs at positions 17, 18, 22, and 23. Residues Lys-17 and Lys-18 each participate in a glycyl lysine isopeptide (Lys-Gly) (interchain with G-Cter in SUMO); alternate cross-link. Lys-22 carries the post-translational modification N6-butyryllysine; alternate. At Lys-23 the chain carries N6-methyllysine; alternate. Lys-35 carries the N6-succinyllysine modification. Residue Lys-38 is modified to N6,N6-dimethyllysine. N6-succinyllysine is present on Lys-47. A Glycyl lysine isopeptide (Lys-Gly) (interchain with G-Cter in ubiquitin) cross-link involves residue Lys-124.

This sequence belongs to the histone H2B family. In terms of assembly, the nucleosome is a histone octamer containing two molecules each of H2A, H2B, H3 and H4 assembled in one H3-H4 heterotetramer and two H2A-H2B heterodimers. The octamer wraps approximately 147 bp of DNA. Monoubiquitinated by the RAD6/UBC2-BRE1 complex to form H2BK123ub1. H2BK123ub1 gives a specific tag for epigenetic transcriptional activation and is also prerequisite for H3K4me and H3K79me formation. H2BK123ub1 also modulates the formation of double-strand breaks during meiosis and is a prerequisite for DNA-damage checkpoint activation. Deubiquitination is performed by UBP8 in presence of SGF11. In terms of processing, phosphorylated by STE20 to form H2BS10ph during progression through meiotic prophase. May be correlated with chromosome condensation. H2BS10ph is also formed after H(2)O(2) treatment, and is a step leading to apoptosis. Post-translationally, acetylated by GCN5, a component of the SAGA complex, to form H2BK11ac and H2BK16ac. H2BK16ac can also be formed by ESA1, a component of the NuA4 histone acetyltransferase (HAT) complex. Acetylation of N-terminal lysines and particularly formation of H2BK11acK16ac has a positive effect on transcription. Sumoylation to form H2BK6su or H2BK7su, and probably also H2BK16su or H2BK17su, occurs preferentially near the telomeres and represses gene transcription.

The protein localises to the nucleus. It is found in the chromosome. Its function is as follows. Core component of nucleosome. Nucleosomes wrap and compact DNA into chromatin, limiting DNA accessibility to the cellular machineries which require DNA as a template. Histones thereby play a central role in transcription regulation, DNA repair, DNA replication and chromosomal stability. DNA accessibility is regulated via a complex set of post-translational modifications of histones, also called histone code, and nucleosome remodeling. The polypeptide is Histone H2B.1 (HTB1) (Saccharomyces cerevisiae (strain ATCC 204508 / S288c) (Baker's yeast)).